A 115-amino-acid polypeptide reads, in one-letter code: Replication initiation control protein YabA (115 aa).

Positions 90, 92, 106, and 109 each coordinate Zn(2+).

Belongs to the YabA family. Homotetramer. Interacts with both DnaA and DnaN, acting as a bridge between these two proteins. Zn(2+) is required as a cofactor.

It is found in the cytoplasm. The protein resides in the nucleoid. In terms of biological role, involved in control of chromosome replication initiation. Inhibits the cooperative binding of DnaA to the oriC region, thus negatively regulating initiation of chromosome replication. Inhibits the ability of DnaA-ATP to form a helix on DNA; does not disassemble preformed DnaA-DNA helices. Decreases the residence time of DnaA on the chromosome at its binding sites (oriC, replication forks and promoter-binding sites). Tethers DnaA to the replication machinery via the DNA polymerase beta sliding clamp subunit (dnaN). Associates with oriC and other DnaA targets on the chromosome in a DnaA-dependent manner. This is Replication initiation control protein YabA from Staphylococcus aureus (strain bovine RF122 / ET3-1).